The chain runs to 686 residues: Acyl-CoA synthetase short-chain family member 3, mitochondrial (686 aa).

Residues 1 to 29 constitute a mitochondrion transit peptide; sequence MKPSWLQCRKVTGAGGLGGSLPASSPARG. Position 226-229 (226-229) interacts with CoA; the sequence is EPGR. ATP-binding positions include 424–426 and 445–450; these read GER and DHWWQT. Lys-517 bears the N6-succinyllysine mark. N6-acetyllysine is present on Lys-523. ATP-binding residues include Asp-538, Arg-553, and Arg-564. Arg-623 is a CoA binding site.

It belongs to the ATP-dependent AMP-binding enzyme family.

It localises to the mitochondrion matrix. It catalyses the reaction acetate + ATP + CoA = acetyl-CoA + AMP + diphosphate. The enzyme catalyses propanoate + ATP + CoA = propanoyl-CoA + AMP + diphosphate. It carries out the reaction butanoate + ATP + CoA = butanoyl-CoA + AMP + diphosphate. Catalyzes the synthesis of acetyl-CoA from short-chain fatty acids. Propionate is the preferred substrate but can also utilize acetate and butyrate with a much lower affinity. In Bos taurus (Bovine), this protein is Acyl-CoA synthetase short-chain family member 3, mitochondrial (ACSS3).